Here is a 488-residue protein sequence, read N- to C-terminus: Patatin-like protein 7 (488 aa).

The interval Q23–M49 is disordered. Positions A32 to T47 are enriched in polar residues. The 201-residue stretch at L101–I301 folds into the PNPLA domain. The short motif at G105 to G110 is the GXGXXG element. S145 (nucleophile) is an active-site residue.

This sequence belongs to the patatin family. In terms of tissue distribution, highly expressed in roots and at lower levels in leaves, stems, flowers and siliques.

The protein localises to the cell membrane. In terms of biological role, possesses non-specific lipolytic acyl hydrolase (LAH) activity. Catalyzes the hydrolysis of the galactolipids monogalactosyldiacylglycerol (MGDG) and digalactosyldiacylglycerol (DGDG), and the phoshpolipids phosphatidylcholine (PC), phosphatidylethanolamine (PE), phosphatidylglycerol (PG), phosphatidic acid (PA), phosphatidylserine (PS). Favors the release of fatty acid at the sn-2 position for PC. Possesses acyl-CoA thioesterase activity. Negatively affects disease resistance to the necrotic fungal pathogen Botrytis cinerea and the avirulent bacteria Pseudomonas syringae by promoting cell death and reducing the efficiency of the hypersensitive response, respectively. However, PLP2 contributes to resistance to cucumber mosaic virus (CMV), an obligate parasite inducing hypersensitive response. May negatively regulate oxylipin production, possibly via participating in membrane repair that includes removal of oxidatively modified lipids. Enzymatic products of PLP2 may influence cellulose content and cell elongation. The chain is Patatin-like protein 7 (PLP7) from Arabidopsis thaliana (Mouse-ear cress).